Consider the following 526-residue polypeptide: Acetyl-CoA hydrolase (526 aa).

Threonine 2 bears the N-acetylthreonine mark. 277-281 contacts CoA; it reads GIGNI. Catalysis depends on glutamate 302, which acts as the 5-glutamyl coenzyme A thioester intermediate. Serine 350 is subject to Phosphoserine. CoA is bound by residues asparagine 392 and glycine 396.

The protein belongs to the acetyl-CoA hydrolase/transferase family. As to quaternary structure, monomer. Glycosylated; contains mannose.

The protein resides in the cytoplasm. The catalysed reaction is acetyl-CoA + H2O = acetate + CoA + H(+). Its function is as follows. Presumably involved in regulating the intracellular acetyl-CoA pool for fatty acid and cholesterol synthesis and fatty acid oxidation. It may be involved in overall regulation of acetylation during melatonin synthesis. This chain is Acetyl-CoA hydrolase (ACH1), found in Saccharomyces cerevisiae (strain ATCC 204508 / S288c) (Baker's yeast).